The following is a 281-amino-acid chain: Elongation factor 1-delta (281 aa).

Alanine 2 is modified (N-acetylalanine). An N6-acetyllysine modification is found at lysine 17. Serine 37, serine 44, serine 60, serine 86, and serine 106 each carry phosphoserine. Residues 80 to 115 (LVVRIASLEVENQSLRGVVQELQQAISKLEARLNVL) are leucine-zipper. Lysine 107 is subject to N6-acetyllysine. Lysine 117 bears the N6-acetyllysine; alternate mark. An N6-succinyllysine; alternate modification is found at lysine 117. The interval 118–172 (SSPGHRATAPQTQHVSPMRQVEPPAKKPATPAEDDEDDDIDLFGSDNEEEDKEAA) is disordered. Serine 119 carries the phosphoserine modification. Position 129 is a phosphothreonine (threonine 129). Serine 133 carries the post-translational modification Phosphoserine. A Phosphothreonine modification is found at threonine 147. Acidic residues predominate over residues 149–169 (AEDDEDDDIDLFGSDNEEEDK). Phosphoserine; by CK2 is present on serine 162. The segment at 173–281 (QLREERLRQY…SVDIAAFNKI (109 aa)) is catalytic (GEF).

This sequence belongs to the EF-1-beta/EF-1-delta family. As to quaternary structure, EF-1 is composed of 4 subunits: alpha, beta, delta isoform 1, and gamma. Isoform 2 interacts with HSF1 and NFE2L2.

The protein localises to the nucleus. In terms of biological role, EF-1-beta and EF-1-delta stimulate the exchange of GDP bound to EF-1-alpha to GTP, regenerating EF-1-alpha for another round of transfer of aminoacyl-tRNAs to the ribosome. Functionally, regulates induction of heat-shock-responsive genes through association with heat shock transcription factors and direct DNA-binding at heat shock promoter elements (HSE). In Macaca fascicularis (Crab-eating macaque), this protein is Elongation factor 1-delta (EEF1D).